Consider the following 97-residue polypeptide: Co-chaperonin GroES (97 aa).

Belongs to the GroES chaperonin family. As to quaternary structure, heptamer of 7 subunits arranged in a ring. Interacts with the chaperonin GroEL.

It localises to the cytoplasm. In terms of biological role, together with the chaperonin GroEL, plays an essential role in assisting protein folding. The GroEL-GroES system forms a nano-cage that allows encapsulation of the non-native substrate proteins and provides a physical environment optimized to promote and accelerate protein folding. GroES binds to the apical surface of the GroEL ring, thereby capping the opening of the GroEL channel. This chain is Co-chaperonin GroES, found in Pseudomonas savastanoi pv. phaseolicola (strain 1448A / Race 6) (Pseudomonas syringae pv. phaseolicola (strain 1448A / Race 6)).